A 178-amino-acid chain; its full sequence is PRA1 family protein 2 (178 aa).

The Cytoplasmic segment spans residues 1–41 (MSEVRLPPLRALDDFVLGSARLVAPDPCDPQRWCHRVINNL). A helical membrane pass occupies residues 42–62 (LYYQTNYLICFGLGLALAGYV). Over 63–64 (RP) the chain is Extracellular. A helical transmembrane segment spans residues 65-85 (LHTLLSALVVAVALGMLVCAA). At 86–96 (ENRAAVRRCRR) the chain is on the cytoplasmic side. A helical membrane pass occupies residues 97–119 (SHPAACLAAVLAVGFLVLWAAGG). Residues 120–122 (AGT) are Extracellular-facing. Residues 123 to 140 (FLLSIAGPVLLILVHASL) form a helical membrane-spanning segment. Residues 141 to 178 (RLRNLKNKIENKIESIGLKRTPMGLLLEALGQEQEAGS) are Cytoplasmic-facing.

Belongs to the PRA1 family. Interacts with CCR5 and GDE1.

It localises to the endosome membrane. May be involved in ER/Golgi transport and vesicular traffic. Plays a proapoptotic role in cerulenin-induced neuroblastoma apoptosis. The chain is PRA1 family protein 2 (PRAF2) from Bos taurus (Bovine).